Consider the following 545-residue polypeptide: Carboxylesterase 5A (545 aa).

The N-terminal stretch at 1-28 is a signal peptide; sequence MSGMWVHPGRTLIWALWVLAAVIKGPAA. Asn86 carries an N-linked (GlcNAc...) (complex) asparagine glycan. The cysteines at positions 94 and 121 are disulfide-linked. An N-linked (GlcNAc...) asparagine glycan is attached at Asn134. The active-site Acyl-ester intermediate is the Ser226. Cys281 and Cys292 are joined by a disulfide. Residue Glu346 is the Charge relay system of the active site. 2 N-linked (GlcNAc...) asparagine glycosylation sites follow: Asn363 and Asn443. His454 acts as the Charge relay system in catalysis.

It belongs to the type-B carboxylesterase/lipase family. N-glycosylated; contains a fucosylated complex carbohydrate. As to expression, present at high level in urine. Expressed in the kidney proximal straight tubular cells and is secreted from the apical compartment of the cells into the urine (at protein level). In mature cats, it is present at higher level in intact males than in castrated males or in intact or spayed females.

The protein localises to the secreted. The catalysed reaction is a carboxylic ester + H2O = an alcohol + a carboxylate + H(+). Functionally, carboxylesterase present at high level in urine that regulates production of felinine, a probable pheromone precursor. Probably acts by hydrolyzing the peptide bond of the felinine precursor 3-methylbutanol cyteinylglycine, producing felinine and glycine in cat urine. In Felis catus (Cat), this protein is Carboxylesterase 5A (CES5A).